A 648-amino-acid polypeptide reads, in one-letter code: tRNA 5-methylaminomethyl-2-thiouridine biosynthesis bifunctional protein MnmC (648 aa).

The tRNA (mnm(5)s(2)U34)-methyltransferase stretch occupies residues 1–228; the sequence is MTDRLVPASL…VDDLLVGEYA (228 aa). The tract at residues 252–648 is FAD-dependent cmnm(5)s(2)U34 oxidoreductase; it reads IGAGLAGCAV…LRARRVGRAG (397 aa).

In the N-terminal section; belongs to the methyltransferase superfamily. tRNA (mnm(5)s(2)U34)-methyltransferase family. It in the C-terminal section; belongs to the DAO family. Requires FAD as cofactor.

It is found in the cytoplasm. It catalyses the reaction 5-aminomethyl-2-thiouridine(34) in tRNA + S-adenosyl-L-methionine = 5-methylaminomethyl-2-thiouridine(34) in tRNA + S-adenosyl-L-homocysteine + H(+). Its function is as follows. Catalyzes the last two steps in the biosynthesis of 5-methylaminomethyl-2-thiouridine (mnm(5)s(2)U) at the wobble position (U34) in tRNA. Catalyzes the FAD-dependent demodification of cmnm(5)s(2)U34 to nm(5)s(2)U34, followed by the transfer of a methyl group from S-adenosyl-L-methionine to nm(5)s(2)U34, to form mnm(5)s(2)U34. The chain is tRNA 5-methylaminomethyl-2-thiouridine biosynthesis bifunctional protein MnmC from Burkholderia lata (strain ATCC 17760 / DSM 23089 / LMG 22485 / NCIMB 9086 / R18194 / 383).